A 393-amino-acid chain; its full sequence is MLRWLTAGESHGPALVAILEGLPAGVSVTSDDIAAALLRRRAGYGRGARMKFEKDEVSIIGGIRHGRTLGGPVAIQVGNTEWPKWQKVMSPDPVPAEELEGVARNAPLTRPRPGHADLVGMQKYGYDEARPILERASARETAARVALGEVARQFLRQALGVEIVSHVVAMGSVSVPDDAPIPAPEDLARVDADPVRCFDPETSARMVAEVDDTRKTGDTLGGVVEVIAYGLPPGLGSHVHWDRRLDARLAGALMGIQAIKGVEFGDGFRTAARRGSAAHDEIDVGPDGIRRRSNRAGGVEGGMSTGDPLRVRAAMKPIATVPRALDTIDVSTGQPAQAHHQRSDVTAVPAAGVVAEAMVALVLADAALEKFGGDSVAETVRNLRGYLDSLIVR.

NADP(+)-binding residues include R40 and R46. FMN contacts are provided by residues R135–S137, Q257–A258, G301, K316–T320, and R342. A disordered region spans residues D280–G306.

The protein belongs to the chorismate synthase family. Homotetramer. FMNH2 serves as cofactor.

The enzyme catalyses 5-O-(1-carboxyvinyl)-3-phosphoshikimate = chorismate + phosphate. It participates in metabolic intermediate biosynthesis; chorismate biosynthesis; chorismate from D-erythrose 4-phosphate and phosphoenolpyruvate: step 7/7. In terms of biological role, catalyzes the anti-1,4-elimination of the C-3 phosphate and the C-6 proR hydrogen from 5-enolpyruvylshikimate-3-phosphate (EPSP) to yield chorismate, which is the branch point compound that serves as the starting substrate for the three terminal pathways of aromatic amino acid biosynthesis. This reaction introduces a second double bond into the aromatic ring system. This chain is Chorismate synthase, found in Thermobifida fusca (strain YX).